The chain runs to 157 residues: Endoribonuclease YbeY (157 aa).

3 residues coordinate Zn(2+): histidine 111, histidine 115, and histidine 121. A disordered region spans residues 136-157 (ELLAELGHPDPYADDETDSITH). Acidic residues predominate over residues 147–157 (YADDETDSITH).

This sequence belongs to the endoribonuclease YbeY family. Zn(2+) serves as cofactor.

The protein localises to the cytoplasm. Single strand-specific metallo-endoribonuclease involved in late-stage 70S ribosome quality control and in maturation of the 3' terminus of the 16S rRNA. This Pseudomonas putida (strain ATCC 700007 / DSM 6899 / JCM 31910 / BCRC 17059 / LMG 24140 / F1) protein is Endoribonuclease YbeY.